A 369-amino-acid chain; its full sequence is 4-hydroxy-3-methylbut-2-en-1-yl diphosphate synthase (flavodoxin) (369 aa).

The [4Fe-4S] cluster site is built by cysteine 270, cysteine 273, cysteine 305, and glutamate 312.

The protein belongs to the IspG family. [4Fe-4S] cluster serves as cofactor.

It catalyses the reaction (2E)-4-hydroxy-3-methylbut-2-enyl diphosphate + oxidized [flavodoxin] + H2O + 2 H(+) = 2-C-methyl-D-erythritol 2,4-cyclic diphosphate + reduced [flavodoxin]. Its pathway is isoprenoid biosynthesis; isopentenyl diphosphate biosynthesis via DXP pathway; isopentenyl diphosphate from 1-deoxy-D-xylulose 5-phosphate: step 5/6. Its function is as follows. Converts 2C-methyl-D-erythritol 2,4-cyclodiphosphate (ME-2,4cPP) into 1-hydroxy-2-methyl-2-(E)-butenyl 4-diphosphate. The protein is 4-hydroxy-3-methylbut-2-en-1-yl diphosphate synthase (flavodoxin) of Haemophilus ducreyi (strain 35000HP / ATCC 700724).